A 432-amino-acid polypeptide reads, in one-letter code: Glutamate-1-semialdehyde 2,1-aminomutase (432 aa).

Lysine 271 bears the N6-(pyridoxal phosphate)lysine mark.

This sequence belongs to the class-III pyridoxal-phosphate-dependent aminotransferase family. HemL subfamily. In terms of assembly, homodimer. The cofactor is pyridoxal 5'-phosphate.

The protein resides in the cytoplasm. It carries out the reaction (S)-4-amino-5-oxopentanoate = 5-aminolevulinate. The protein operates within porphyrin-containing compound metabolism; protoporphyrin-IX biosynthesis; 5-aminolevulinate from L-glutamyl-tRNA(Glu): step 2/2. It functions in the pathway porphyrin-containing compound metabolism; chlorophyll biosynthesis. This is Glutamate-1-semialdehyde 2,1-aminomutase from Prochlorococcus marinus (strain MIT 9211).